We begin with the raw amino-acid sequence, 628 residues long: Otolith matrix protein OMM-64 (628 aa).

An N-terminal signal peptide occupies residues 1–20 (MLSRLLIVPLIFALAGLAIS). The segment at 43-628 (KGDKDGGGLT…AAATALAAQS (586 aa)) is disordered. Over residues 78–93 (DSSPDTTDTPDASSSD) the composition is skewed to low complexity. The segment covering 182–214 (TESPGSDSAESPGSDSAESPGSDSTESPGSDST) has biased composition (polar residues). Composition is skewed to basic and acidic residues over residues 246–266 (ETDKDDDKSDDKSDADAATDK), 276–285 (ELDGKAHAED), and 311–343 (RPEKDVKNDSDDSKDTTEDDKPDKDDKKNRDSA). Residue N318 is glycosylated (N-linked (GlcNAc...) asparagine). 5 stretches are compositionally biased toward acidic residues: residues 449–462 (DSQEDSVDESEAEP), 477–489 (EPQEDDSEEDTDD), 514–536 (DKEDMDKDDMDKDDMDKDDMDKD), 544–556 (DSVDDQSESDAEP), and 565–578 (DEIDGEETMTPDSE). The span at 613–628 (ASQAADAAATALAAQS) shows a compositional bias: low complexity.

Specifically expressed in otolith matrix-producing cells.

The protein resides in the secreted. Its subcellular location is the extracellular space. It is found in the extracellular matrix. Its function is as follows. Calcium-binding component of otoliths, a calcium carbonate structure of the inner ear involved in hearing and balance sensing. Binds calcium. This chain is Otolith matrix protein OMM-64, found in Oncorhynchus mykiss (Rainbow trout).